The primary structure comprises 74 residues: U3-agatoxin-Ao1g (74 aa).

A signal peptide spans 1–20; that stretch reads MRAIISLLLISTMVFGVIEA. Residues 21–34 constitute a propeptide that is removed on maturation; it reads VSVEEGLKIFEGER. 4 cysteine pairs are disulfide-bonded: C37–C53, C44–C58, C52–C68, and C60–C66. Position 72 is an asparagine amide (N72).

Belongs to the neurotoxin 07 (Beta/delta-agtx) family. 03 (aga-4) subfamily. Aga sub-subfamily. Expressed by the venom gland.

It localises to the secreted. Insecticidal neurotoxin that modulates the insect Nav channel (DmNaV1/tipE (para/tipE)) in a unique manner, with both the activation and inactivation processes being affected. The voltage dependence of activation is shifted toward more hyperpolarized potentials (analogous to site 4 toxins) and a non-inactivating persistent sodium current is induced (site 3-like action). Interestingly, both effects take place in a voltage-dependent manner, producing a bell-shaped curve between -80 and 0 mV. This is U3-agatoxin-Ao1g from Agelena orientalis (Funnel-web spider).